The primary structure comprises 336 residues: Iron(3+)-hydroxamate import system permease protein FhuG (336 aa).

Transmembrane regions (helical) follow at residues Leu9–Leu29, Ile63–Val83, Pro91–Phe111, Phe124–Leu144, Leu155–Leu175, Ile193–Leu213, Ile245–Ala265, Thr285–Ala305, and Glu313–Met333.

It belongs to the binding-protein-dependent transport system permease family. FecCD subfamily. As to quaternary structure, the complex is composed of an ATP-binding protein (FhuC), two transmembrane proteins (FhuB and FhuG) and a solute-binding protein (FhuD or YxeB).

Its subcellular location is the cell membrane. In terms of biological role, part of the ABC transporter complex FhuBGCD involved in iron(3+)-hydroxamate import. Responsible for the translocation of the substrate across the membrane. This Bacillus subtilis (strain 168) protein is Iron(3+)-hydroxamate import system permease protein FhuG (fhuG).